We begin with the raw amino-acid sequence, 369 residues long: Phospho-N-acetylmuramoyl-pentapeptide-transferase (369 aa).

10 consecutive transmembrane segments (helical) span residues 30-50 (LAIFTAQFVVVAMGSRFIRWM), 74-94 (GTPTMGGVMILAGLLVGTLLW), 97-117 (LSNPYVWAVVLVTAGYGLLGF), 136-156 (IRLALEAFIAMAAVLIIIVFA), 177-197 (YFVDLSWGYLLFGAFIIVGAA), 208-228 (GLATVPVMIAAAAYGLIAYLV), 244-264 (GVGEIAVFCGALIGSGLGFLW), 272-292 (IFMGDTGSLALGGAVGAVAVA), 297-317 (IVLAIIGGLFVAETLSVIIQV), and 346-366 (TVVIRFWIVAIMLALVGLATL).

It belongs to the glycosyltransferase 4 family. MraY subfamily. The cofactor is Mg(2+).

The protein resides in the cell inner membrane. The catalysed reaction is UDP-N-acetyl-alpha-D-muramoyl-L-alanyl-gamma-D-glutamyl-meso-2,6-diaminopimeloyl-D-alanyl-D-alanine + di-trans,octa-cis-undecaprenyl phosphate = di-trans,octa-cis-undecaprenyl diphospho-N-acetyl-alpha-D-muramoyl-L-alanyl-D-glutamyl-meso-2,6-diaminopimeloyl-D-alanyl-D-alanine + UMP. It functions in the pathway cell wall biogenesis; peptidoglycan biosynthesis. Catalyzes the initial step of the lipid cycle reactions in the biosynthesis of the cell wall peptidoglycan: transfers peptidoglycan precursor phospho-MurNAc-pentapeptide from UDP-MurNAc-pentapeptide onto the lipid carrier undecaprenyl phosphate, yielding undecaprenyl-pyrophosphoryl-MurNAc-pentapeptide, known as lipid I. The polypeptide is Phospho-N-acetylmuramoyl-pentapeptide-transferase (Phenylobacterium zucineum (strain HLK1)).